Here is a 65-residue protein sequence, read N- to C-terminus: Alpha-like toxin Bom4 (65 aa).

The LCN-type CS-alpha/beta domain occupies 2–64; the sequence is RDAYIAQPEN…VPIRIPGKCH (63 aa). Cystine bridges form between cysteine 12–cysteine 63, cysteine 16–cysteine 36, cysteine 22–cysteine 46, and cysteine 26–cysteine 48.

The protein belongs to the long (4 C-C) scorpion toxin superfamily. Sodium channel inhibitor family. Alpha subfamily. As to expression, expressed by the venom gland.

It is found in the secreted. Alpha toxins bind voltage-independently at site-3 of sodium channels (Nav) and inhibit the inactivation of the activated channels, thereby blocking neuronal transmission. This alpha-like toxin is highly toxic to mice and insects. This is Alpha-like toxin Bom4 from Buthus occitanus mardochei (Moroccan scorpion).